A 46-amino-acid polypeptide reads, in one-letter code: Succinate dehydrogenase subunit 8, mitochondrial (46 aa).

As to quaternary structure, component of complex II composed of eight subunits in plants: four classical SDH subunits SDH1, SDH2, SDH3 and SDH4 (a flavoprotein (FP), an iron-sulfur protein (IP), and a cytochrome b composed of a large and a small subunit.), as well as four subunits unknown in mitochondria from bacteria and heterotrophic eukaryotes.

Its subcellular location is the mitochondrion inner membrane. It participates in carbohydrate metabolism; tricarboxylic acid cycle. The polypeptide is Succinate dehydrogenase subunit 8, mitochondrial (Arabidopsis thaliana (Mouse-ear cress)).